Consider the following 137-residue polypeptide: Large ribosomal subunit protein uL16 (137 aa).

Belongs to the universal ribosomal protein uL16 family. Part of the 50S ribosomal subunit.

Functionally, binds 23S rRNA and is also seen to make contacts with the A and possibly P site tRNAs. The chain is Large ribosomal subunit protein uL16 from Methylocella silvestris (strain DSM 15510 / CIP 108128 / LMG 27833 / NCIMB 13906 / BL2).